The sequence spans 206 residues: MARYLGPKLKLSRREGTDLFLKSGVRAIDTKCKIEQAPGQHGARKPRLSDYGVQLREKQKVRRTYGVLERQFRNYYKEAARLKGNTGENLLALLEGRLDNVVYRMGFGATRAESRQLVSHKSIMVNGRVVSIASYQVTPNDVVSIREKAKKQSRVKAALELAEQREKPTWLEVDATKMEGVFKRIPERTDLSADINEHLIVELYSK.

Positions 96 to 156 (GRLDNVVYRM…EKAKKQSRVK (61 aa)) constitute an S4 RNA-binding domain.

This sequence belongs to the universal ribosomal protein uS4 family. In terms of assembly, part of the 30S ribosomal subunit. Contacts protein S5. The interaction surface between S4 and S5 is involved in control of translational fidelity.

In terms of biological role, one of the primary rRNA binding proteins, it binds directly to 16S rRNA where it nucleates assembly of the body of the 30S subunit. Functionally, with S5 and S12 plays an important role in translational accuracy. This Erwinia tasmaniensis (strain DSM 17950 / CFBP 7177 / CIP 109463 / NCPPB 4357 / Et1/99) protein is Small ribosomal subunit protein uS4.